A 1052-amino-acid polypeptide reads, in one-letter code: Fibroblast growth factor receptor homolog 2 (1052 aa).

Residues 1–19 (MAKVPITLVMIIAIVSAAA) form the signal peptide. The Extracellular portion of the chain corresponds to 20-600 (DLGCDYGHHR…EIYALLHAHP (581 aa)). Ig-like C2-type domains follow at residues 23–117 (CDYG…IASF), 124–230 (PALP…PTQL), and 240–340 (PMLK…RTVA). Residues C30 and C90 are joined by a disulfide bond. 6 N-linked (GlcNAc...) asparagine glycosylation sites follow: N99, N137, N175, N181, N249, and N257. An intrachain disulfide couples C164 to C217. C262 and C329 are joined by a disulfide. Low complexity predominate over residues 358–372 (TTTTTVASPIPTAST). Residues 358 to 393 (TTTTTVASPIPTASTGEDNDDDVENPAAEASGGVGP) form a disordered region. 2 Ig-like C2-type domains span residues 393 to 478 (PPVF…FSVQ) and 487 to 585 (PIIV…RVVS). The cysteines at positions 416 and 462 are disulfide-linked. 9 N-linked (GlcNAc...) asparagine glycosylation sites follow: N423, N444, N494, N500, N526, N541, N546, N555, and N576. A disulfide bond links C507 and C566. Residues 601–626 (LGFTLAAITIVALFLLGSAFITFMLR) traverse the membrane as a helical segment. Topologically, residues 627 to 1052 (RLRREKLLKL…LRYQYTYKFN (426 aa)) are cytoplasmic. Residues 712–1000 (LSLGSILGEG…ELVESFDGIL (289 aa)) enclose the Protein kinase domain. ATP-binding positions include 718–726 (LGEGAFGRV) and K748. D864 acts as the Proton acceptor in catalysis. Phosphotyrosine; by autocatalysis is present on Y895. Positions 1017 to 1038 (PMLETPPSSGDEDDGSDTETFR) are disordered.

The protein belongs to the protein kinase superfamily. Tyr protein kinase family. Fibroblast growth factor receptor subfamily. As to expression, during embryogenesis, expression is seen in mesoderm, endodermal precursor cells, CNS midline cells and trachea and salivary duct ectodermal cells.

It localises to the membrane. It catalyses the reaction L-tyrosyl-[protein] + ATP = O-phospho-L-tyrosyl-[protein] + ADP + H(+). Functionally, may be required for patterning of muscle precursor cells: generation of mesodermal and endodermal layers, invaginations of various types of cells, and CNS formation. Essential for the ability of the migrating tracheal and midline cells to recognize external guiding cues. This chain is Fibroblast growth factor receptor homolog 2 (btl), found in Drosophila melanogaster (Fruit fly).